The following is a 273-amino-acid chain: Putative expansin-B2 (273 aa).

Residues 1–29 (MTILVVDRYYMLMNLLFALTCLLLNLTHC) form the signal peptide. Asn-36 carries N-linked (GlcNAc...) asparagine glycosylation. The 109-residue stretch at 65-173 (GGACGYGNAV…KKVECNYIGK (109 aa)) folds into the Expansin-like EG45 domain. Cystine bridges form between Cys-68/Cys-97, Cys-100/Cys-168, and Cys-105/Cys-111. One can recognise an Expansin-like CBD domain in the interval 186-269 (NSFAVLVAYV…NWQPGAIYKS (84 aa)).

Belongs to the expansin family. Expansin B subfamily.

The protein resides in the secreted. The protein localises to the cell wall. It is found in the membrane. Functionally, may cause loosening and extension of plant cell walls by disrupting non-covalent bonding between cellulose microfibrils and matrix glucans. No enzymatic activity has been found. This is Putative expansin-B2 (EXPB2) from Arabidopsis thaliana (Mouse-ear cress).